Here is a 67-residue protein sequence, read N- to C-terminus: Large ribosomal subunit protein uL29 (67 aa).

Belongs to the universal ribosomal protein uL29 family.

The protein is Large ribosomal subunit protein uL29 of Zymomonas mobilis subsp. mobilis (strain ATCC 31821 / ZM4 / CP4).